The sequence spans 93 residues: Beta-defensin 128 (93 aa).

Residues 1–18 (MKLFLVLIILLFEVLTDG) form the signal peptide. 3 disulfide bridges follow: Cys-24/Cys-52, Cys-32/Cys-46, and Cys-36/Cys-53.

Belongs to the beta-defensin family.

It localises to the secreted. Has antibacterial activity. In Macaca fascicularis (Crab-eating macaque), this protein is Beta-defensin 128 (DEFB128).